The sequence spans 555 residues: NADH-ubiquinone oxidoreductase chain 5 (555 aa).

The next 15 helical transmembrane spans lie at 37–57 (LAMTVMIPVGIVTLCVLLYAI), 69–89 (FYIILSVFAIFMTILVVSDNY), 90–110 (IMMFIGWEFVGVISYLLISFW), 133–153 (FFMLALGIFLSYFHAVDFDTL), 155–175 (LAAPYTNTLILNILSLLLLLA), 197–217 (TPVSALLHAATMVCAGVYVLV), 230–250 (LIGICWLGGVTTLVSGLIAIV), 257–275 (VIALSTMSQLSIMVLAIGI), 287–307 (CHAFFKALLFMGAGSVIHSYI), 323–343 (LPFSYTAILIASLSLMAIPGL), 366–388 (ILYYMAVGSATLTSLYSIRVLYL), 406–426 (ENIRMLIPMIILVIYSIFIGF), 454–474 (WYIKLLPLILGLSLSLLLVYI), 494–516 (IYYDQLLNNVIIRKTLIFGGYLN), and 534–554 (RALTYINIGIFLNLLYLFFFY).

It belongs to the complex I subunit 5 family.

Its subcellular location is the mitochondrion inner membrane. The enzyme catalyses a ubiquinone + NADH + 5 H(+)(in) = a ubiquinol + NAD(+) + 4 H(+)(out). Functionally, core subunit of the mitochondrial membrane respiratory chain NADH dehydrogenase (Complex I) that is believed to belong to the minimal assembly required for catalysis. Complex I functions in the transfer of electrons from NADH to the respiratory chain. The immediate electron acceptor for the enzyme is believed to be ubiquinone. In Candida parapsilosis (Yeast), this protein is NADH-ubiquinone oxidoreductase chain 5 (ND5).